The chain runs to 582 residues: ATP-dependent lipid A-core flippase (582 aa).

Transmembrane regions (helical) follow at residues 16 to 36, 63 to 83, 153 to 173, 253 to 273, and 275 to 295; these read LWPT…ALIL, VLVW…ITSY, IIGL…ILIV, PIIQ…ASFP, and VMDS…IALM. The region spanning 28–310 is the ABC transmembrane type-1 domain; that stretch reads IVAGVALILN…LTNVNAQFQR (283 aa). An ABC transporter domain is found at 342–578; sequence VEFRNVTFTY…RGVYAQLHKM (237 aa). Residue 376–383 coordinates ATP; sequence GRSGSGKS.

It belongs to the ABC transporter superfamily. Lipid exporter (TC 3.A.1.106) family. Homodimer.

The protein localises to the cell inner membrane. It carries out the reaction ATP + H2O + lipid A-core oligosaccharideSide 1 = ADP + phosphate + lipid A-core oligosaccharideSide 2.. Its function is as follows. Involved in lipopolysaccharide (LPS) biosynthesis. Translocates lipid A-core from the inner to the outer leaflet of the inner membrane. Transmembrane domains (TMD) form a pore in the inner membrane and the ATP-binding domain (NBD) is responsible for energy generation. This Escherichia coli O157:H7 protein is ATP-dependent lipid A-core flippase.